Reading from the N-terminus, the 403-residue chain is Chalcone synthase 3 (403 aa).

C170 is an active-site residue.

It belongs to the thiolase-like superfamily. Chalcone/stilbene synthases family.

It catalyses the reaction (E)-4-coumaroyl-CoA + 3 malonyl-CoA + 3 H(+) = 2',4,4',6'-tetrahydroxychalcone + 3 CO2 + 4 CoA. The protein operates within secondary metabolite biosynthesis; flavonoid biosynthesis. In terms of biological role, the primary product of this enzyme is 4,2',4',6'-tetrahydroxychalcone (also termed naringenin-chalcone or chalcone) which can under specific conditions spontaneously isomerize into naringenin. This Gerbera hybrida (Daisy) protein is Chalcone synthase 3 (CHS3).